The chain runs to 347 residues: ATPase GET3 (347 aa).

26–33 (KGGVGKTT) lines the ATP pocket. Residue D57 is part of the active site. 2 residues coordinate ATP: E241 and N268. 2 residues coordinate Zn(2+): C279 and C282.

This sequence belongs to the arsA ATPase family. In terms of assembly, homodimer. Component of the Golgi to ER traffic (GET) complex, which is composed of GET1, GET2 and GET3. Within the complex, GET1 and GET2 form a heterotetramer which is stabilized by phosphatidylinositol binding and which binds to the GET3 homodimer. Interacts with the chloride channel protein GEF1.

The protein resides in the cytoplasm. The protein localises to the endoplasmic reticulum. It is found in the golgi apparatus. Its function is as follows. ATPase required for the post-translational delivery of tail-anchored (TA) proteins to the endoplasmic reticulum. Recognizes and selectively binds the transmembrane domain of TA proteins in the cytosol. This complex then targets to the endoplasmic reticulum by membrane-bound receptors GET1 and GET2, where the tail-anchored protein is released for insertion. This process is regulated by ATP binding and hydrolysis. ATP binding drives the homodimer towards the closed dimer state, facilitating recognition of newly synthesized TA membrane proteins. ATP hydrolysis is required for insertion. Subsequently, the homodimer reverts towards the open dimer state, lowering its affinity for the GET1-GET2 receptor, and returning it to the cytosol to initiate a new round of targeting. Cooperates with the HDEL receptor ERD2 to mediate the ATP-dependent retrieval of resident ER proteins that contain a C-terminal H-D-E-L retention signal from the Golgi to the ER. Involved in low-level resistance to the oxyanions arsenite and arsenate, and in heat tolerance. This Meyerozyma guilliermondii (strain ATCC 6260 / CBS 566 / DSM 6381 / JCM 1539 / NBRC 10279 / NRRL Y-324) (Yeast) protein is ATPase GET3.